The sequence spans 91 residues: Probable Fe(2+)-trafficking protein (91 aa).

This sequence belongs to the Fe(2+)-trafficking protein family.

Could be a mediator in iron transactions between iron acquisition and iron-requiring processes, such as synthesis and/or repair of Fe-S clusters in biosynthetic enzymes. This is Probable Fe(2+)-trafficking protein from Acidobacterium capsulatum (strain ATCC 51196 / DSM 11244 / BCRC 80197 / JCM 7670 / NBRC 15755 / NCIMB 13165 / 161).